Here is a 521-residue protein sequence, read N- to C-terminus: Zinc finger CCCH domain-containing protein 45 (521 aa).

Disordered stretches follow at residues 28-60 (TEDS…GFEG), 142-185 (TPAI…PLCS), and 296-319 (SRSF…ISPP). A compositionally biased stretch (polar residues) spans 34–43 (NVASQPQRHS). The segment covering 159-168 (EESSNSKVES) has biased composition (low complexity). A compositionally biased stretch (polar residues) spans 170-185 (VTANKQGQLETKPLCS). The segment at 469–497 (NKIHQQCIYFGTANGCNMGDSCTYVHDRY) adopts a C3H1-type zinc-finger fold.

This Arabidopsis thaliana (Mouse-ear cress) protein is Zinc finger CCCH domain-containing protein 45.